The primary structure comprises 221 residues: Small ribosomal subunit protein uS3c (221 aa).

Residues 43–121 (IQNYIQKNMR…KLKIAITKIA (79 aa)) form the KH type-2 domain.

The protein belongs to the universal ribosomal protein uS3 family. Part of the 30S ribosomal subunit.

The protein localises to the plastid. It localises to the chloroplast. The chain is Small ribosomal subunit protein uS3c (rps3) from Jasminum nudiflorum (Winter jasmine).